A 342-amino-acid polypeptide reads, in one-letter code: Ribosomal RNA small subunit methyltransferase C (342 aa).

This sequence belongs to the methyltransferase superfamily. RsmC family. As to quaternary structure, monomer.

It is found in the cytoplasm. The catalysed reaction is guanosine(1207) in 16S rRNA + S-adenosyl-L-methionine = N(2)-methylguanosine(1207) in 16S rRNA + S-adenosyl-L-homocysteine + H(+). Specifically methylates the guanine in position 1207 of 16S rRNA in the 30S particle. The protein is Ribosomal RNA small subunit methyltransferase C of Salmonella enteritidis PT4 (strain P125109).